Consider the following 409-residue polypeptide: Short chain dehydrogenase sirS (409 aa).

Val-49, Leu-68, Lys-195, Val-288, Thr-290, and Ala-299 together coordinate NADP(+). The disordered stretch occupies residues 306–332; sequence GVGPEGAGEEEGKGEAEGGAKGATGWS.

This sequence belongs to the short-chain dehydrogenases/reductases (SDR) family. Highly divergent.

The protein operates within mycotoxin biosynthesis. Short chain dehydrogenase; part of the gene cluster that mediates the biosynthesis of sirodesmin PL, an epipolythiodioxopiperazine (ETP) characterized by a disulfide bridged cyclic dipeptide and that acts as a phytotoxin which is involved in the blackleg didease of canola. SirD catalyzes the O-prenylation of L-tyrosine (L-Tyr) in the presence of dimethylallyl diphosphate (DMAPP) to yield 4-O-dimethylallyl-L-Tyr, and therefore represents probably the first pathway-specific enzyme in the biosynthesis of sirodesmin PL. 4-O-dimethylallyl-L-Tyr, then undergoes condensation with L-Ser in a reaction catalyzed by the non-ribosomal peptide synthase sirP to form the diketopiperazine (DKP) backbone. Further bishydroxylation of the DKP performed by the cytochrome P450 monooxygenase sirC leads to the production of the intermediate phomamide. This step is essential to form the reactive thiol group required for toxicity of sirodesmin PL. The next steps of sirodesmin biosynthesis are not well understood yet, but some predictions could be made from intermediate compounds identification. Phomamide is converted into phomalizarine via oxidation, probably by sirT. Further oxidation, methylation (by sirM or sirN) and reduction steps convert phomalizarine to deacetyl sirodesmin. Finally, acetyltransferase sirH probably acetylates deacetyl sirodesmin to produce sirodesmin PL. The chain is Short chain dehydrogenase sirS from Leptosphaeria maculans (Blackleg fungus).